Reading from the N-terminus, the 495-residue chain is FK506-binding protein 4 (495 aa).

Disordered stretches follow at residues 115–198 (GSDD…ADLE), 243–312 (MDDD…NKRA), and 333–385 (KQQK…KPAT). 4 stretches are compositionally biased toward acidic residues: residues 116–126 (SDDEEDSDEEA), 152–161 (AQEESDEEME), 178–196 (ESDD…EGAD), and 243–283 (MDDD…LDGL). The segment covering 373–382 (EKPKQAKDSK) has biased composition (basic and acidic residues). The region spanning 409–495 (GDTVGVRYIG…IFDVKLLEIK (87 aa)) is the PPIase FKBP-type domain.

It belongs to the FKBP-type PPIase family. FKBP3/4 subfamily. In terms of assembly, binds to histones H3 and H4.

Its subcellular location is the nucleus. It catalyses the reaction [protein]-peptidylproline (omega=180) = [protein]-peptidylproline (omega=0). With respect to regulation, inhibited by both FK506 and rapamycin. Functionally, PPIase that acts as a histone chaperone. Histone proline isomerase that increases the rate of cis-trans isomerization at prolines on the histone H3 N-terminal tail. Proline isomerization influences H3 methylation thereby regulating gene expression. This is FK506-binding protein 4 (FPR4) from Gibberella zeae (strain ATCC MYA-4620 / CBS 123657 / FGSC 9075 / NRRL 31084 / PH-1) (Wheat head blight fungus).